Consider the following 384-residue polypeptide: Terpene cyclase ascI (384 aa).

The signal sequence occupies residues 1–25 (MPQLAGKLILAGLIPLGAWVLHGFA). The chain crosses the membrane as a helical span at residues 82–102 (LSLHAFMFAGQGVPLLVLNML). Asparagine 109 carries N-linked (GlcNAc...) asparagine glycosylation. Transmembrane regions (helical) follow at residues 119–139 (VFGI…YLFL), 164–184 (AVGF…SLPH), 194–214 (VLSV…AYFA), and 235–255 (GAVY…TFAI). Asparagine 258 is a glycosylation site (N-linked (GlcNAc...) asparagine). The next 2 membrane-spanning stretches (helical) occupy residues 291-311 (WFLQ…AIGI) and 330-350 (IALR…ALSL). Residue asparagine 372 is glycosylated (N-linked (GlcNAc...) asparagine).

Belongs to the membrane-bound ascI terpene cyclase family.

The protein resides in the membrane. It carries out the reaction 16-hydroxy-ilicicolin A epoxide = ascofuranol. Its pathway is secondary metabolite biosynthesis; terpenoid biosynthesis. Epoxide hydrolase; part of the asc-2 gene cluster that mediates the biosynthesis of ascofuranone, a strong inhibitor of cyanide-insensitive alternative oxidases and a promising drug candidate against African trypanosomiasis. The first step in the pathway is performed by the non-reducing polyketide synthase ascC that produces orsellinic acid by condensing acetyl-CoA with 3 malonyl-CoA units. Orsellinic acid is then prenylated by the prenyltransferase ascA to yield ilicicolinic acid B. Ilicicolinic acid B is further reduced to ilicicolin B by the reductase ascB. The halogenase ascD then chlorinates ilicicolin B to produce ilicicolin A which is converted to ilicicolin A epoxide by the cytochrome P450 monooxygenase ascE that catalyzes stereoselective epoxidation of the terminal double bond of the prenyl group. Ilicicolin A epoxide is the last common precursor for the biosynthesis of ascofuranone and ascochlorin. The terpene cyclase ascF produces a monocyclic terpene, and the cyclization reaction is proposed to be initiated by protonation of the terminal epoxide of ilicicolin A epoxide to generate a monocyclic tertiarycation, which is followed by a series of hydride and methyl shifts with abstraction of proton, leading to the formation of the (14S,15R,19R)-trimethylcyclohexanone ring structure of ilicicolin C, which is finally reduced to ascochlorin by the dehydrogenase ascG. On the other hand, ilicicolin A epoxide is hydroxylated by the cytochrome P450 monooxygenase ascH, and the resultant product is cyclized by the terpene cyclase ascI to ascofuranol via protonation-initiated epoxide ring opening, which facilitates the 6-endo-tet cyclization to form the tetrahy-drofuran ring. Finally, ascofuranol is oxidized into ascofuranone by ascJ. The protein is Terpene cyclase ascI of Acremonium egyptiacum (Oospora egyptiaca).